Reading from the N-terminus, the 313-residue chain is Ribosomal RNA small subunit methyltransferase H (313 aa).

S-adenosyl-L-methionine is bound by residues 37–39 (GGH), aspartate 57, phenylalanine 83, aspartate 104, and glutamine 111.

It belongs to the methyltransferase superfamily. RsmH family.

The protein resides in the cytoplasm. The catalysed reaction is cytidine(1402) in 16S rRNA + S-adenosyl-L-methionine = N(4)-methylcytidine(1402) in 16S rRNA + S-adenosyl-L-homocysteine + H(+). Functionally, specifically methylates the N4 position of cytidine in position 1402 (C1402) of 16S rRNA. This chain is Ribosomal RNA small subunit methyltransferase H, found in Mycoplasmoides gallisepticum (strain R(low / passage 15 / clone 2)) (Mycoplasma gallisepticum).